The following is a 933-amino-acid chain: Serine/threonine-protein kinase PknD (933 aa).

Positions 4–291 constitute a Protein kinase domain; it reads YDIIRMIGKG…ELKDDIEQHL (288 aa). ATP is bound by residues 10–18 and Lys33; that span reads IGKGGMGEV. Residue Asp138 is the Proton acceptor of the active site.

This sequence belongs to the protein kinase superfamily. Ser/Thr protein kinase family. Post-translationally, autophosphorylated on serine and threonine residues.

The catalysed reaction is L-seryl-[protein] + ATP = O-phospho-L-seryl-[protein] + ADP + H(+). The enzyme catalyses L-threonyl-[protein] + ATP = O-phospho-L-threonyl-[protein] + ADP + H(+). In terms of biological role, together with the serine/threonine kinase Pkn1, may play a role in the specific interactions with host proteins during intracellular growth. The protein is Serine/threonine-protein kinase PknD of Chlamydia felis (strain Fe/C-56) (Chlamydophila felis).